Here is an 89-residue protein sequence, read N- to C-terminus: Small ribosomal subunit protein uS14 (89 aa).

It belongs to the universal ribosomal protein uS14 family. As to quaternary structure, part of the 30S ribosomal subunit. Contacts proteins S3 and S10.

Binds 16S rRNA, required for the assembly of 30S particles and may also be responsible for determining the conformation of the 16S rRNA at the A site. In Pelodictyon phaeoclathratiforme (strain DSM 5477 / BU-1), this protein is Small ribosomal subunit protein uS14.